We begin with the raw amino-acid sequence, 211 residues long: MKCISKQGEIKELIKNGKINDVLQLIEEDTLLLEEIYGFLKSDDIQLKITCLAILGNLYLKGKVQITQLIKHLEEVLLENDKDAILNALLILKEIPEVYQEDLLKRIILKYIGKDIKDCEDDKDKSTLPSVKRDKIMIIFEILKAVKNKELKKTKIMYAANLDWKTFRNYIGYLLDNEFIRKTDGVYTLTPKGELLLEKIEEVFRLIYPDK.

This is an uncharacterized protein from Methanocaldococcus jannaschii (strain ATCC 43067 / DSM 2661 / JAL-1 / JCM 10045 / NBRC 100440) (Methanococcus jannaschii).